We begin with the raw amino-acid sequence, 118 residues long: Large ribosomal subunit protein uL22 (118 aa).

Belongs to the universal ribosomal protein uL22 family. Part of the 50S ribosomal subunit.

Its function is as follows. This protein binds specifically to 23S rRNA; its binding is stimulated by other ribosomal proteins, e.g. L4, L17, and L20. It is important during the early stages of 50S assembly. It makes multiple contacts with different domains of the 23S rRNA in the assembled 50S subunit and ribosome. Functionally, the globular domain of the protein is located near the polypeptide exit tunnel on the outside of the subunit, while an extended beta-hairpin is found that lines the wall of the exit tunnel in the center of the 70S ribosome. This is Large ribosomal subunit protein uL22 from Pediococcus pentosaceus (strain ATCC 25745 / CCUG 21536 / LMG 10740 / 183-1w).